The following is a 332-amino-acid chain: L-lactate dehydrogenase A chain (332 aa).

At Ala-2 the chain carries N-acetylalanine. Lys-5 is subject to N6-acetyllysine; alternate. Lys-5 bears the N6-succinyllysine; alternate mark. An N6-acetyllysine modification is found at Lys-14. 29–57 lines the NAD(+) pocket; it reads GAVGMACAISILMKDLADEVALVDVMEDK. Lys-57 carries the N6-acetyllysine; alternate modification. Lys-57 is covalently cross-linked (Glycyl lysine isopeptide (Lys-Gly) (interchain with G-Cter in SUMO2); alternate). An N6-acetyllysine modification is found at Lys-81. Arg-106 contributes to the substrate binding site. Lys-118 is subject to N6-acetyllysine; alternate. Lys-118 is modified (N6-succinyllysine; alternate). An N6-acetyllysine modification is found at Lys-126. Asn-138 contributes to the NAD(+) binding site. Residues Asn-138 and Arg-169 each coordinate substrate. The active-site Proton acceptor is the His-193. N6-acetyllysine occurs at positions 224 and 232. At Tyr-239 the chain carries Phosphotyrosine. An N6-acetyllysine modification is found at Lys-243. Thr-248 contacts substrate. Thr-309 is modified (phosphothreonine). Residue Lys-318 is modified to N6-acetyllysine; alternate. Position 318 is an N6-succinyllysine; alternate (Lys-318). At Thr-322 the chain carries Phosphothreonine.

The protein belongs to the LDH/MDH superfamily. LDH family. Homotetramer. Interacts with PTEN upstream reading frame protein MP31. ISGylated.

It is found in the cytoplasm. It catalyses the reaction (S)-lactate + NAD(+) = pyruvate + NADH + H(+). It functions in the pathway fermentation; pyruvate fermentation to lactate; (S)-lactate from pyruvate: step 1/1. Functionally, interconverts simultaneously and stereospecifically pyruvate and lactate with concomitant interconversion of NADH and NAD(+). In Bos taurus (Bovine), this protein is L-lactate dehydrogenase A chain (LDHA).